The sequence spans 298 residues: ATP phosphoribosyltransferase (298 aa).

It belongs to the ATP phosphoribosyltransferase family. Long subfamily. Mg(2+) serves as cofactor.

Its subcellular location is the cytoplasm. The catalysed reaction is 1-(5-phospho-beta-D-ribosyl)-ATP + diphosphate = 5-phospho-alpha-D-ribose 1-diphosphate + ATP. It participates in amino-acid biosynthesis; L-histidine biosynthesis; L-histidine from 5-phospho-alpha-D-ribose 1-diphosphate: step 1/9. With respect to regulation, feedback inhibited by histidine. Its function is as follows. Catalyzes the condensation of ATP and 5-phosphoribose 1-diphosphate to form N'-(5'-phosphoribosyl)-ATP (PR-ATP). Has a crucial role in the pathway because the rate of histidine biosynthesis seems to be controlled primarily by regulation of HisG enzymatic activity. The protein is ATP phosphoribosyltransferase of Aliivibrio salmonicida (strain LFI1238) (Vibrio salmonicida (strain LFI1238)).